A 955-amino-acid chain; its full sequence is MPGGAGAARLCLLAFALQPLRPRAAREPGWTRGSEEGSPKLQHELIIPQWKTSESPVREKHPLKAELRVMAEGRELILDLEKNEQLFAPSYTETHYTSSGNPQTTTRKLEDHCFYHGTVRETELSSVTLSTCRGIRGLITVSSNLSYVIEPLPDSKGQHLIYRSEHLKPPPGNCGFEHSKPTTRDWALQFTQQTKKRPRRMKREDLNSMKYVELYLVADYLEFQKNRRDQDATKHKLIEIANYVDKFYRSLNIRIALVGLEVWTHGNMCEVSENPYSTLWSFLSWRRKLLAQKYHDNAQLITGMSFHGTTIGLAPLMAMCSVYQSGGVNMDHSENAIGVAATMAHEMGHNFGMTHDSADCCSASAADGGCIMAAATGHPFPKVFNGCNRRELDRYLQSGGGMCLSNMPDTRMLYGGRRCGNGYLEDGEECDCGEEEECNNPCCNASNCTLRPGAECAHGSCCHQCKLLAPGTLCREQARQCDLPEFCTGKSPHCPTNFYQMDGTPCEGGQAYCYNGMCLTYQEQCQQLWGPGARPAPDLCFEKVNVAGDTFGNCGKDMNGEHRKCNMRDAKCGKIQCQSSEARPLESNAVPIDTTIIMNGRQIQCRGTHVYRGPEEEGDMLDPGLVMTGTKCGYNHICFEGQCRNTSFFETEGCGKKCNGHGVCNNNQNCHCLPGWAPPFCNTPGHGGSIDSGPMPPESVGPVVAGVLVAILVLAVLMLMYYCCRQNNKLGQLKPSALPSKLRQQFSCPFRVSQNSGTGHANPTFKLQTPQGKRKVINTPEILRKPSQPPPRPPPDYLRGGSPPAPLPAHLSRAARNSPGPGSQIERTESSRRPPPSRPIPPAPNCIVSQDFSRPRPPQKALPANPVPGRRSLPRPGGASPLRPPGAGPQQSRPLAALAPKVSPREALKVKAGTRGLQGGRCRVEKTKQFMLLVVWTELPEQKPRAKHSCFLVPA.

An N-terminal signal peptide occupies residues 1-25; the sequence is MPGGAGAARLCLLAFALQPLRPRAA. A propeptide spanning residues 26-202 is cleaved from the precursor; it reads REPGWTRGSE…QTKKRPRRMK (177 aa). The short motif at 130-137 is the Cysteine switch element; that stretch reads STCRGIRG. Cys132 contributes to the Zn(2+) binding site. The N-linked (GlcNAc...) asparagine glycan is linked to Asn144. The Extracellular segment spans residues 203 to 699; the sequence is REDLNSMKYV…IDSGPMPPES (497 aa). The region spanning 210 to 408 is the Peptidase M12B domain; that stretch reads KYVELYLVAD…GGGMCLSNMP (199 aa). Disulfide bonds link Cys320–Cys403, Cys360–Cys387, and Cys361–Cys370. Zn(2+) is bound at residue His345. Glu346 is a catalytic residue. Zn(2+) is bound by residues His349 and His355. The Disintegrin domain occupies 416-502; sequence GRRCGNGYLE…HCPTNFYQMD (87 aa). Residues Asn444 and Asn447 are each glycosylated (N-linked (GlcNAc...) asparagine). Cys474 and Cys494 are oxidised to a cystine. Asn645 carries N-linked (GlcNAc...) asparagine glycosylation. The EGF-like domain maps to 650–682; that stretch reads ETEGCGKKCNGHGVCNNNQNCHCLPGWAPPFCN. 3 cysteine pairs are disulfide-bonded: Cys654/Cys664, Cys658/Cys670, and Cys672/Cys681. The helical transmembrane segment at 700-720 threads the bilayer; it reads VGPVVAGVLVAILVLAVLMLM. The Cytoplasmic segment spans residues 721-955; sequence YYCCRQNNKL…AKHSCFLVPA (235 aa). The span at 753-771 shows a compositional bias: polar residues; that stretch reads SQNSGTGHANPTFKLQTPQ. Residues 753 to 917 form a disordered region; sequence SQNSGTGHAN…LKVKAGTRGL (165 aa). Pro residues-rich tracts occupy residues 787 to 796 and 833 to 844; these read SQPPPRPPPD and RPPPSRPIPPAP. The short motif at 833-844 is the SH3-binding element; it reads RPPPSRPIPPAP.

As to quaternary structure, interacts with SH3PXD2A. Requires Zn(2+) as cofactor. The precursor is cleaved by a furin endopeptidase. As to expression, expressed in many normal organ tissues and several cancer cell lines.

It is found in the membrane. In terms of biological role, participates in the proteolytic processing of beta-type neuregulin isoforms which are involved in neurogenesis and synaptogenesis, suggesting a regulatory role in glial cell. Also cleaves alpha-2 macroglobulin. May be involved in osteoblast differentiation and/or osteoblast activity in bone. In Homo sapiens (Human), this protein is Disintegrin and metalloproteinase domain-containing protein 19 (ADAM19).